The chain runs to 231 residues: DNA mismatch repair protein MutH (231 aa).

This sequence belongs to the MutH family.

The protein resides in the cytoplasm. Sequence-specific endonuclease that cleaves unmethylated GATC sequences. It is involved in DNA mismatch repair. The chain is DNA mismatch repair protein MutH from Salmonella typhi.